The sequence spans 221 residues: Protein-L-isoaspartate O-methyltransferase (221 aa).

The active site involves serine 64.

The protein belongs to the methyltransferase superfamily. L-isoaspartyl/D-aspartyl protein methyltransferase family.

The protein localises to the cytoplasm. It carries out the reaction [protein]-L-isoaspartate + S-adenosyl-L-methionine = [protein]-L-isoaspartate alpha-methyl ester + S-adenosyl-L-homocysteine. Functionally, catalyzes the methyl esterification of L-isoaspartyl residues in peptides and proteins that result from spontaneous decomposition of normal L-aspartyl and L-asparaginyl residues. It plays a role in the repair and/or degradation of damaged proteins. The protein is Protein-L-isoaspartate O-methyltransferase of Cytophaga hutchinsonii (strain ATCC 33406 / DSM 1761 / CIP 103989 / NBRC 15051 / NCIMB 9469 / D465).